The following is a 148-amino-acid chain: Protein F15 (148 aa).

This sequence belongs to the poxviridae F15 protein family.

This Fowlpox virus (strain NVSL) (FPV) protein is Protein F15.